The primary structure comprises 129 residues: Small ribosomal subunit protein bS6 (129 aa).

This sequence belongs to the bacterial ribosomal protein bS6 family.

Its function is as follows. Binds together with bS18 to 16S ribosomal RNA. The sequence is that of Small ribosomal subunit protein bS6 from Microcystis aeruginosa (strain NIES-843 / IAM M-2473).